The sequence spans 185 residues: ATP synthase subunit delta, chloroplastic (185 aa).

Belongs to the ATPase delta chain family. F-type ATPases have 2 components, F(1) - the catalytic core - and F(0) - the membrane proton channel. F(1) has five subunits: alpha(3), beta(3), gamma(1), delta(1), epsilon(1). CF(0) has four main subunits: a(1), b(1), b'(1) and c(10-14). The alpha and beta chains form an alternating ring which encloses part of the gamma chain. F(1) is attached to F(0) by a central stalk formed by the gamma and epsilon chains, while a peripheral stalk is formed by the delta, b and b' chains.

The protein localises to the plastid. It is found in the chloroplast thylakoid membrane. In terms of biological role, f(1)F(0) ATP synthase produces ATP from ADP in the presence of a proton or sodium gradient. F-type ATPases consist of two structural domains, F(1) containing the extramembraneous catalytic core and F(0) containing the membrane proton channel, linked together by a central stalk and a peripheral stalk. During catalysis, ATP synthesis in the catalytic domain of F(1) is coupled via a rotary mechanism of the central stalk subunits to proton translocation. Its function is as follows. This protein is part of the stalk that links CF(0) to CF(1). It either transmits conformational changes from CF(0) to CF(1) or is implicated in proton conduction. This chain is ATP synthase subunit delta, chloroplastic, found in Gracilaria tenuistipitata var. liui (Red alga).